The following is an 88-amino-acid chain: Apolipoprotein C-I (88 aa).

The N-terminal stretch at 1-26 (MRLFIALPVLIVVVAMALEGPAPAQA) is a signal peptide.

The protein belongs to the apolipoprotein C1 family.

It is found in the secreted. Its function is as follows. Inhibitor of lipoprotein binding to the low density lipoprotein (LDL) receptor, LDL receptor-related protein, and very low density lipoprotein (VLDL) receptor. Associates with high density lipoproteins (HDL) and the triacylglycerol-rich lipoproteins in the plasma and makes up about 10% of the protein of the VLDL and 2% of that of HDL. Appears to interfere directly with fatty acid uptake and is also the major plasma inhibitor of cholesteryl ester transfer protein (CETP). Modulates the interaction of APOE with beta-migrating VLDL and inhibits binding of beta-VLDL to the LDL receptor-related protein. Binds free fatty acids and reduces their intracellular esterification. The chain is Apolipoprotein C-I (Apoc1) from Grammomys surdaster (African woodland thicket rat).